An 84-amino-acid chain; its full sequence is Putative membrane protein insertion efficiency factor (84 aa).

This sequence belongs to the UPF0161 family.

It is found in the cell inner membrane. In terms of biological role, could be involved in insertion of integral membrane proteins into the membrane. This chain is Putative membrane protein insertion efficiency factor, found in Shewanella pealeana (strain ATCC 700345 / ANG-SQ1).